A 620-amino-acid chain; its full sequence is Glutathione-regulated potassium-efflux system protein KefC (620 aa).

12 helical membrane passes run 4 to 24, 26 to 46, 54 to 74, 90 to 110, 114 to 134, 149 to 169, 178 to 198, 218 to 238, 270 to 290, 294 to 314, 327 to 347, and 359 to 379; these read HTLIQALIYLGSAALIVPIAV, LGLGSVLGYLIAGCIIGPWGL, SILHFAEIGVVLMLFIIGLEL, GALQMVICGGLLGLFCMLLGL, VAELIGMTLALSSTAIAMQAM, FAVLLFQDIAAIPLVAMIPLL, MGAFALSALKVAGALVLVVLL, VFSAVALFLVFGFGLLLEEVG, GLLLGLFFIGVGMSIDFGTLL, LRIVILLLGFLIIKIAMLWLI, WFAVLLGQGSEFAFVVFGTAQ, and SLTLAVALSMAATPILLVILN. Positions 399–518 constitute an RCK N-terminal domain; that stretch reads QPRVIIAGFG…AGVEKPERET (120 aa). Positions 597 to 620 are disordered; the sequence is GWQGTEEGKHTGNMADEPETKPSS.

Belongs to the monovalent cation:proton antiporter 2 (CPA2) transporter (TC 2.A.37) family. KefC subfamily. As to quaternary structure, homodimer. Interacts with the regulatory subunit KefF.

It localises to the cell inner membrane. Pore-forming subunit of a potassium efflux system that confers protection against electrophiles. Catalyzes K(+)/H(+) antiport. In Shigella sonnei (strain Ss046), this protein is Glutathione-regulated potassium-efflux system protein KefC.